The chain runs to 86 residues: UPF0297 protein SSP1144 (86 aa).

This sequence belongs to the UPF0297 family.

The sequence is that of UPF0297 protein SSP1144 from Staphylococcus saprophyticus subsp. saprophyticus (strain ATCC 15305 / DSM 20229 / NCIMB 8711 / NCTC 7292 / S-41).